The following is a 325-amino-acid chain: uncharacterized protein (325 aa).

Positions 1 to 75 (MSQPPEHPGN…PPPGYPTHLQ (75 aa)) are disordered. The span at 24–70 (YPPPGYGAPPPPPGYGPPPGTYLPPGYNAPPPPPGYGPPPGPPPPGY) shows a compositional bias: pro residues. 4 consecutive transmembrane segments (helical) span residues 96 to 116 (AVTL…VIGA), 153 to 173 (IVMF…HAGI), 205 to 225 (LLIV…GLIF), and 273 to 293 (LVGE…AALI).

To M.tuberculosis Rv2560.

It is found in the cell membrane. This is an uncharacterized protein from Mycobacterium bovis (strain ATCC BAA-935 / AF2122/97).